Here is a 1220-residue protein sequence, read N- to C-terminus: Protein patched homolog 1 (1220 aa).

The segment at 1 to 27 is disordered; the sequence is MASDPRDPGPAGGVFGDLPPSYTRSPP. At 1–84 the chain is on the cytoplasmic side; the sequence is MASDPRDPGP…GCHIQRHCGK (84 aa). The chain crosses the membrane as a helical span at residues 85 to 105; sequence VLFIGLLVFGALSVGLRVAAI. At 106 to 419 the chain is on the extracellular side; the sequence is ETDIEKLWVE…LNDIMKSFSD (314 aa). N-linked (GlcNAc...) asparagine glycosylation occurs at asparagine 397. A helical transmembrane segment spans residues 420 to 440; the sequence is VSVIRVAGGYLLMLAYACVTM. An SSD domain is found at 421–579; sequence SVIRVAGGYL…LLIFPAILSL (159 aa). Over 441–449 the chain is Cytoplasmic; sequence LRWDCAKSQ. The helical transmembrane segment at 450–470 threads the bilayer; that stretch reads GAVGLAGVLLVALSVAAGLGL. Residues 471–484 lie on the Extracellular side of the membrane; it reads CSLLGLSFNAATTQ. A helical membrane pass occupies residues 485-505; that stretch reads VLPSLALGIGVDDMFLLGHSF. Residues 506–528 lie on the Cytoplasmic side of the membrane; sequence TETRSNIPFKERTGDCLRRTGTS. A helical membrane pass occupies residues 529–549; the sequence is VALTSVNNMIAFFMAALVPIP. The Extracellular segment spans residues 550–558; that stretch reads ALRAFSLQA. The chain crosses the membrane as a helical span at residues 559–579; that stretch reads AVVVVFNFAMALLIFPAILSL. The Cytoplasmic portion of the chain corresponds to 580-739; the sequence is DLHRREDKRL…APLLLKPETK (160 aa). Residues 740 to 760 form a helical membrane-spanning segment; it reads TVVVVVFVALLSLSLYGTTMV. Topologically, residues 761 to 1016 are extracellular; it reads HDGLYLTDIV…WEQYIGLRHW (256 aa). 2 N-linked (GlcNAc...) asparagine glycosylation sites follow: asparagine 865 and asparagine 888. The chain crosses the membrane as a helical span at residues 1017–1037; that stretch reads FLLSISVVLACTFLVCAILLL. Residues 1038-1044 lie on the Cytoplasmic side of the membrane; the sequence is NPWTAGV. The helical transmembrane segment at 1045 to 1065 threads the bilayer; the sequence is IVFILPMMTVELFGIMGLIGI. The Extracellular segment spans residues 1066–1072; the sequence is KLSAIPV. The helical transmembrane segment at 1073–1093 threads the bilayer; that stretch reads VILIASVGIGVEFTVHIALGF. Over 1094 to 1110 the chain is Cytoplasmic; that stretch reads LTAIGDRNTRSAVAMEH. Residues 1111–1131 traverse the membrane as a helical segment; it reads MFAPVIDGAISTLLGVLMLAG. Residues 1132–1143 are Extracellular-facing; the sequence is SEFDFIMRYFFA. Residues 1144-1164 traverse the membrane as a helical segment; it reads VLAILTLLGILNGLVLLPVLL. Residues 1165–1220 are Cytoplasmic-facing; that stretch reads SLMGPPAEVVPANNANHLQSPSPEPMPPPMNHHGYYAGHIPKASHQAFSETSDSEY.

The protein belongs to the patched family. In terms of processing, glycosylation is necessary for SHH binding. As to expression, detected in embryonic presomitic mesoderm, neuroectoderm, tissue surrounding the notochord, ventral neural tube.

It is found in the membrane. Acts as a receptor for sonic hedgehog (SHH), indian hedgehog (IHH) and desert hedgehog (DHH). Associates with the smoothened protein (SMO) to transduce the hedgehog's proteins signal. The polypeptide is Protein patched homolog 1 (ptch1) (Danio rerio (Zebrafish)).